A 696-amino-acid polypeptide reads, in one-letter code: MSAEKLYIEKELSWLSFNERVLQEAADKTVPLIERIRFLGIFSNNLDEFYKVRFADVKRRILINQERGGSDNSKRLLSKMQAKALKLNEQFDELYSELIREMARRRIFLVNEHQLDEAQEKWITKYFRKEVMPHITPLLMKDEIDVLQFLKDEYAYIAVELRKEDHSQYALIEIPTDHLPRFVMVPEQKGKRRKTIILLDNIIRYCLDELFKGFFDYDELAGYAMKMTRDAEYDLRNEIEYSLLEQMSAGVNQRLTAMPVRFVYEREMPQEMLDFLCSKLRISNYDNLIPGGRYHNFKDFIAFPNVGREYLENKPMPPMKCADFEGYANSFEAIKAKDILLYYPYHTFDHIGELVRQASFDPKVLSIKINIYRVAKDSRLMNSLIDAVHNGKNVTVVVELQARFDEEANIEWSKVLTEAGVHVIFGAPGLKIHSKLLMISRREGDDIIRYAHIGTGNFHEKTARIYTDFSLLTADQEITNEVRNVFGYIENPYRPVKFNHLMVSPRNSRTQIYRLIDNEIANAKAGKKAGLTIKVNNLVDKGIVTRLYAASNAGVKINMIIRGMCALVPGIEGVSENIRIISIVDRFLEHPRVVITHNDGDPQVYISSADWMTRNIDHRIEVAAPVRDPRLKQRIIDITNIHFTDTVKARLIDKEMSNSYVPRGNRKKVRSQVAIYDYLKNIEKQTRRQKSDVSDT.

N45 provides a ligand contact to ATP. The Mg(2+) site is built by R373 and R403. Positions 428–462 (PGLKIHSKLLMISRREGDDIIRYAHIGTGNFHEKT) constitute a PLD phosphodiesterase domain. The active-site Phosphohistidine intermediate is H433. ATP is bound by residues Y466, R562, and H590.

It belongs to the polyphosphate kinase 1 (PPK1) family. The cofactor is Mg(2+). An intermediate of this reaction is the autophosphorylated ppk in which a phosphate is covalently linked to a histidine residue through a N-P bond.

The enzyme catalyses [phosphate](n) + ATP = [phosphate](n+1) + ADP. Functionally, catalyzes the reversible transfer of the terminal phosphate of ATP to form a long-chain polyphosphate (polyP). This Vibrio parahaemolyticus serotype O3:K6 (strain RIMD 2210633) protein is Polyphosphate kinase.